The following is a 441-amino-acid chain: MGVGSSLRMQLTAQKPRVDRFVVPRYSLPEIHRRMTWSDRCEKYNGEIWSSKYLQQKRYINFLDEAFGLAPLKAQQRNSDTFDDWCWPCAPRKKSYLSTADNVLDLPSYSITSFPDVLDWSHDDILVAALGKKYHKWSWRTQSPVDQGQTMFDIRCCKFDPKGKRLLLGTDMRVEVHNELSKCQFVQYCKCNIQICTITAIDWSPTGNSFVTGCSRGRICAMNEKDFPIKSLVLIEGAMLVVKISPNARYVAVAGVHKHRVWILSWPDLIRFRFMKTNEIVKDLNWHPWQTALLGVATLSSDRHASMIIWEPHATDKLRQQDVGRGRYSIDAMRFNNKTGELLLSLWSLDVNVPYPKSSELVVMSNFDTVVDHWGESHTGLNRIRTMVFSPDGTKLATATADEDLIIWNFLPNDYKKILARKKFTAFPQFLDICSYGYTIR.

WD repeat units lie at residues 110 to 148 (SITS…VDQG), 149 to 187 (QTMF…QFVQ), 193 to 233 (IQIC…KSLV), 235 to 276 (IEGA…RFMK), 277 to 320 (TNEI…KLRQ), 345 to 379 (SLWS…ESHT), and 380 to 420 (GLNR…KILA). The D-box signature appears at 379 to 390 (TGLNRIRTMVFS).

The protein belongs to the WD repeat CORT family.

It localises to the cytoplasm. Its function is as follows. Controls wing pigmentation patterning, possibly by regulating scale cell development. Probably acts as an activator of the anaphase promoting complex/cyclosome (APC/C) that promotes the ubiquitin ligase activity and substrate specificity of the APC/C. This is Protein cortex from Biston betularia (Pepper-and-salt geometer moth).